The primary structure comprises 294 residues: Bifunctional protein FolD (294 aa).

NADP(+) contacts are provided by residues 166–168 (GRS), serine 195, and isoleucine 236.

The protein belongs to the tetrahydrofolate dehydrogenase/cyclohydrolase family. In terms of assembly, homodimer.

The enzyme catalyses (6R)-5,10-methylene-5,6,7,8-tetrahydrofolate + NADP(+) = (6R)-5,10-methenyltetrahydrofolate + NADPH. It catalyses the reaction (6R)-5,10-methenyltetrahydrofolate + H2O = (6R)-10-formyltetrahydrofolate + H(+). The protein operates within one-carbon metabolism; tetrahydrofolate interconversion. Functionally, catalyzes the oxidation of 5,10-methylenetetrahydrofolate to 5,10-methenyltetrahydrofolate and then the hydrolysis of 5,10-methenyltetrahydrofolate to 10-formyltetrahydrofolate. The protein is Bifunctional protein FolD of Chloroherpeton thalassium (strain ATCC 35110 / GB-78).